Reading from the N-terminus, the 322-residue chain is Formimidoylglutamase (322 aa).

H130, D156, H158, D160, C245, and D247 together coordinate Mn(2+).

It belongs to the arginase family. Mn(2+) serves as cofactor.

The enzyme catalyses N-formimidoyl-L-glutamate + H2O = formamide + L-glutamate. Its pathway is amino-acid degradation; L-histidine degradation into L-glutamate; L-glutamate from N-formimidoyl-L-glutamate (hydrolase route): step 1/1. Functionally, catalyzes the conversion of N-formimidoyl-L-glutamate to L-glutamate and formamide. In Lysinibacillus sphaericus (strain C3-41), this protein is Formimidoylglutamase.